The primary structure comprises 116 residues: Putative pterin-4-alpha-carbinolamine dehydratase (116 aa).

Belongs to the pterin-4-alpha-carbinolamine dehydratase family.

The enzyme catalyses (4aS,6R)-4a-hydroxy-L-erythro-5,6,7,8-tetrahydrobiopterin = (6R)-L-erythro-6,7-dihydrobiopterin + H2O. The polypeptide is Putative pterin-4-alpha-carbinolamine dehydratase (Xylella fastidiosa (strain M23)).